We begin with the raw amino-acid sequence, 301 residues long: NAD kinase (301 aa).

The active-site Proton acceptor is the Asp-84. NAD(+) is bound by residues 84–85 (DG), Arg-89, 158–159 (NE), Lys-169, Asn-188, 199–204 (TAYSFS), and Gln-258.

The protein belongs to the NAD kinase family. A divalent metal cation is required as a cofactor.

The protein localises to the cytoplasm. It catalyses the reaction NAD(+) + ATP = ADP + NADP(+) + H(+). Involved in the regulation of the intracellular balance of NAD and NADP, and is a key enzyme in the biosynthesis of NADP. Catalyzes specifically the phosphorylation on 2'-hydroxyl of the adenosine moiety of NAD to yield NADP. This Tropheryma whipplei (strain Twist) (Whipple's bacillus) protein is NAD kinase.